The following is a 409-amino-acid chain: bZIP transcription factor 16 (409 aa).

The span at 1 to 16 shows a compositional bias: basic and acidic residues; that stretch reads MASNEMEKSSKEKEPK. 4 disordered regions span residues 1 to 63, 118 to 236, 274 to 327, and 362 to 409; these read MASN…VASS, NGMT…LPVS, MHGK…LRKQ, and TTEN…KDST. The segment covering 24 to 34 has biased composition (low complexity); that stretch reads APPSSQEPSSA. The segment covering 133-145 has biased composition (basic and acidic residues); that stretch reads GDAKQSEVKEKLP. Over residues 152 to 178 the composition is skewed to polar residues; sequence SLGSLNMITGKNNEPGKNSGASANGAY. Residues 179–203 show a composition bias toward low complexity; the sequence is SKSGESASDGSSEGSDGNSQNDSGS. Residues 216-228 show a composition bias toward polar residues; that stretch reads NGGSANGPQNGSA. The bZIP domain occupies 305 to 368; that stretch reads ELKRQRRKQS…EELTTENTSL (64 aa). The Bipartite nuclear localization signal signature appears at 307-323; it reads KRQRRKQSNRESARRSR. Residues 307–326 are basic motif; that stretch reads KRQRRKQSNRESARRSRLRK. Positions 314-327 are enriched in basic and acidic residues; the sequence is SNRESARRSRLRKQ. The segment at 333 to 368 is leucine-zipper; sequence LAQRAEVLNEENTNLRAEINKLKSQCEELTTENTSL. Positions 398-409 are enriched in basic and acidic residues; sequence AERKVDSYKDST.

The protein belongs to the bZIP family. In terms of assembly, monomer, homodimer and heterodimers with BZIP68 and GBF1/BZIP41. Heterodimers with GBF2/BZIP54 and GBF3/BZIP55. Binds DNA as monomer and forms homo- and heterodimers. The monomeric form is redox regulated. Interacts with GIP1.

It is found in the nucleus. In terms of biological role, transcriptional activator that binds to the G-box motif (5'-CACGTG-3') and other cis-acting elements with 5'-ACGT-3' core, such as Hex, C-box and as-1 motifs. Possesses high binding affinity to G-box, much lower affinity to Hex and C-box, and little affinity to as-1 element. G-box and G-box-like motifs are cis-acting elements defined in promoters of certain plant genes which are regulated by such diverse stimuli as light-induction or hormone control. Binds to the G-box motif 5'-CACGTG-3' of LHCB2.4 (At3g27690) promoter. May act as transcriptional repressor in light-regulated expression of LHCB2.4. Binds DNA as monomer. DNA-binding activity is redox-dependent. This is bZIP transcription factor 16 from Arabidopsis thaliana (Mouse-ear cress).